A 958-amino-acid chain; its full sequence is Glycine dehydrogenase (decarboxylating) (958 aa).

Lys708 carries the post-translational modification N6-(pyridoxal phosphate)lysine.

It belongs to the GcvP family. In terms of assembly, the glycine cleavage system is composed of four proteins: P, T, L and H. Pyridoxal 5'-phosphate serves as cofactor.

The enzyme catalyses N(6)-[(R)-lipoyl]-L-lysyl-[glycine-cleavage complex H protein] + glycine + H(+) = N(6)-[(R)-S(8)-aminomethyldihydrolipoyl]-L-lysyl-[glycine-cleavage complex H protein] + CO2. Its function is as follows. The glycine cleavage system catalyzes the degradation of glycine. The P protein binds the alpha-amino group of glycine through its pyridoxal phosphate cofactor; CO(2) is released and the remaining methylamine moiety is then transferred to the lipoamide cofactor of the H protein. The sequence is that of Glycine dehydrogenase (decarboxylating) from Proteus mirabilis (strain HI4320).